The primary structure comprises 858 residues: MYPEGPKPEHDQFPLQDTQFSNQPPVHRSPFEDPYPEDQPHFDKQPLLTSPAYPPTQYPTSPPPPNFPGSPAVQQPYPPFNNNPSPVSPGVPAYFNPAPPSPNMHYGQAPRRQPRRFKTTRQVKLTKGNLVLDCPVPTAYLNDVPIKDGKEFTHMRYTAATCDPKDFASDGYTLRQPMLGRKTELFIVLTMYNEDEVLFARTMHGVMKNIAHLCTRDRSRTWGPNGWEKVVVCIVSDGRNKINQRTLSVLALLGVYQDGIAKNVVHGKPVTAHIYEYTTQVSVDPNMEVKKAGSKNVVPCQILFCLKEKNQKKINSHRWFFQAFGPVIDPHICVLIDVGTKPGGTSIYHLWKAFDINSNIAGACGEIRAMAGTRGVALLNPLVAAQNFEYKMSNILDKPLESVFGYISVLPGAFSAYRFKALQNDVNGHGPLEKYFLGETQHGGDADIFTANMYLAEDRILCYELVAKKEAHWVLHYVSSSYGETDVPDKVDEFISQRRRWLNGSFFAGVYALYHWRKVWQSDHSYLRKMMFMVEDIYNTYNLIFSWFALGNFYLTFFILTKALGHGVDGSTLTDPPFSPDTGETLHTVFNYIYIVLIVIQFIMALGNRPQGSKIAYTSSMVFFAILMVYMMFAAIWITVVGVKTVVETSGGQFIEMLEQSTFRNIIISLCATYVMYFVSSFMFLDPWHMFTSFIQYILLSPSYTNVLNIYAFCNTHDVSWGTKGDNTVATDLGVVKAKKDGSGDLAVEVEVPVEEKDINAAFIDAQVELTKKIEPEKSHRDAKTKQEDYYRSFRTRLVLAWIISNLALVVAIANTTVIDIKGKASIYLGFILWSVAGLSVIRFTGSTLYLIFKIFTG.

A compositionally biased stretch (basic and acidic residues) spans 1–12 (MYPEGPKPEHDQ). Residues 1 to 116 (MYPEGPKPEH…GQAPRRQPRR (116 aa)) form a disordered region. Polar residues predominate over residues 15–24 (LQDTQFSNQP). 2 stretches are compositionally biased toward pro residues: residues 52–68 (AYPP…PNFP) and 76–89 (PYPP…PVSP). Transmembrane regions (helical) follow at residues 500 to 517 (RWLN…YHWR), 540 to 560 (TYNL…FFIL), 586 to 606 (LHTV…IMAL), 621 to 641 (MVFF…ITVV), 665 to 685 (NIII…FMFL), 799 to 819 (VLAW…TTVI), and 825 to 845 (ASIY…IRFT).

It belongs to the chitin synthase family.

The protein resides in the cell membrane. It catalyses the reaction [(1-&gt;4)-N-acetyl-beta-D-glucosaminyl](n) + UDP-N-acetyl-alpha-D-glucosamine = [(1-&gt;4)-N-acetyl-beta-D-glucosaminyl](n+1) + UDP + H(+). Its function is as follows. Polymerizes chitin, a structural polymer of the cell wall and septum, by transferring the sugar moiety of UDP-GlcNAc to the non-reducing end of the growing chitin polymer. This Rhizopus oligosporus (Rhizopus microsporus var. oligosporus) protein is Chitin synthase 2 (CHS2).